The primary structure comprises 121 residues: uncharacterized protein (121 aa).

The protein to M.jannaschii MJ0017 and MJ1466.

This is an uncharacterized protein from Aquifex aeolicus (strain VF5).